The primary structure comprises 230 residues: Large ribosomal subunit protein uL1 (230 aa).

Belongs to the universal ribosomal protein uL1 family. In terms of assembly, part of the 50S ribosomal subunit.

Functionally, binds directly to 23S rRNA. The L1 stalk is quite mobile in the ribosome, and is involved in E site tRNA release. Its function is as follows. Protein L1 is also a translational repressor protein, it controls the translation of the L11 operon by binding to its mRNA. The chain is Large ribosomal subunit protein uL1 from Granulibacter bethesdensis (strain ATCC BAA-1260 / CGDNIH1).